Here is a 346-residue protein sequence, read N- to C-terminus: RNA polymerase II holoenzyme cyclin-like subunit (346 aa).

The 100-residue stretch at 59–158 folds into the Cyclin N-terminal domain; it reads NLLIKLGRRL…EMDSYLFLHH (100 aa).

This sequence belongs to the cyclin family. Cyclin C subfamily. In terms of assembly, component of the SRB8-11 complex, a regulatory module of the Mediator complex.

Its subcellular location is the nucleus. Functionally, component of the SRB8-11 complex. The SRB8-11 complex is a regulatory module of the Mediator complex which is itself involved in regulation of basal and activated RNA polymerase II-dependent transcription. The SRB8-11 complex may be involved in the transcriptional repression of a subset of genes regulated by Mediator. It may inhibit the association of the Mediator complex with RNA polymerase II to form the holoenzyme complex. The SRB8-11 complex phosphorylates the C-terminal domain (CTD) of the largest subunit of RNA polymerase II. The chain is RNA polymerase II holoenzyme cyclin-like subunit (SSN8) from Scheffersomyces stipitis (strain ATCC 58785 / CBS 6054 / NBRC 10063 / NRRL Y-11545) (Yeast).